The chain runs to 1008 residues: MSVEQFINDQLHSIVGISDRSICQYVHALAKKAKSAPDLVEKLRDAGDFPISPAIQSFADQLMSRMPRQATSARQRGPTTAELAEQELNRLNRAVGVLEDYSASSTKTKNVRKRKESSSEDDEAPIKASKPGKSVKPSKSDDSESDIEAMEAKLDADIAERDALAARINKKEKDKTRNVMEKKRDDNKDKEGSSMDKLREESRRQYLKKRKVDKLEELEAIVHDDQTLFAREKLTKREKADMEYRKKVLEYTKAHGKAGDVMKMKRYHLPDASTKQIPSQYVEDDEEDFRPGGDGAKWEEEQLMASMLHLGAKDAKRKEQEFELLLDEKVDFIQALQMPGTNEEVVETEAEKKKMSIEETRKSLPVYAFRDAFIEAVKEHQVLIIEGETGSGKTTQLPQYLYEAGFCEGGKRIGCTQPRRVAAMSVAARVADEVGCKLGTQVGYSIRFEDCTSEKTVLKYMTDGMLLREFLNEPDLASYSVMMIDEAHERTLHTDILFGLVKDIARFRKDLKLLISSATLDAEKFSSFFDDAPIFRIPGRRFPVDIYYTQAPEADYVDAAIVTIMQIHLTQPLPGDILVFLTGQEEIETVQEALMERSKALGSKIKELIPLPVYANLPSDLQAKIFEPTPKDARKVVLATNIAETSVTIDGINYVIDPGFSKQNSFDARSGVEHLHVVTISKAAANQRAGRAGRTGPGKCFRLYTAWAYKHELEEQPIPEIQRTNLGNVVLMLKSLGIHDLVHFDFLDPPPQETLVIALEQLYALGALNHRGELTKLGRRMAEFPCDPCMSKMIIASEKYECSEEIVTIAAMLSCNAAVFYRPKAQVIHADSARKGFWSPAGDHITLMNVYNKWQESSFSQRWCVENYVQHRTMKRARDVRDQLVGLLERVEIETKSSTDTIKIRKAITAGYFYNVSKLDNTGHYKTVKHKHTTHPHPNSCLFEETPRWVVYFELVFTSKEFMREMSEIESGWLLEVAPHYYKGRELEDATNKKMPKNKGKSGKDLER.

Disordered regions lie at residues 104-146 and 169-202; these read SSTK…SESD and NKKEKDKTRNVMEKKRDDNKDKEGSSMDKLREES. Residues 127-137 show a composition bias toward low complexity; it reads KASKPGKSVKP. Residues 374–538 enclose the Helicase ATP-binding domain; that stretch reads IEAVKEHQVL…FDDAPIFRIP (165 aa). ATP is bound at residue 387–394; it reads GETGSGKT. Residues 485-488 carry the DEAH box motif; it reads DEAH. The 175-residue stretch at 563–737 folds into the Helicase C-terminal domain; it reads TIMQIHLTQP…NVVLMLKSLG (175 aa). A disordered region spans residues 988–1008; that stretch reads EDATNKKMPKNKGKSGKDLER.

Belongs to the DEAD box helicase family. DEAH subfamily. DDX16/PRP8 sub-subfamily. As to quaternary structure, interacts with mep-1 and smn-1.

The protein resides in the nucleus. It catalyses the reaction ATP + H2O = ADP + phosphate + H(+). Its function is as follows. ATP-binding RNA helicase involved in pre-mRNA splicing. Operates during embryogenesis. The sequence is that of Probable pre-mRNA-splicing factor ATP-dependent RNA helicase mog-4 (mog-4) from Caenorhabditis elegans.